A 278-amino-acid chain; its full sequence is Chitosanase (278 aa).

Positions 1 to 40 (MHSQHRTARIALAVVLTAIPASLATAGVGYASTQASTAVK) are cleaved as a signal peptide. The active-site Proton donor is Glu-62. Asp-80 functions as the Nucleophile in the catalytic mechanism.

This sequence belongs to the glycosyl hydrolase 46 family.

The protein localises to the secreted. It catalyses the reaction Endohydrolysis of beta-(1-&gt;4)-linkages between D-glucosamine residues in a partly acetylated chitosan.. Aids in the defense against invading fungal pathogens by degrading their cell wall chitosan. The polypeptide is Chitosanase (csn) (Streptomyces sp. (strain N174)).